Consider the following 163-residue polypeptide: ATP synthase subunit b 1 (163 aa).

A helical transmembrane segment spans residues 7–27 (PETWVAIAFVILMGLFAYLGV).

This sequence belongs to the ATPase B chain family. F-type ATPases have 2 components, F(1) - the catalytic core - and F(0) - the membrane proton channel. F(1) has five subunits: alpha(3), beta(3), gamma(1), delta(1), epsilon(1). F(0) has three main subunits: a(1), b(2) and c(10-14). The alpha and beta chains form an alternating ring which encloses part of the gamma chain. F(1) is attached to F(0) by a central stalk formed by the gamma and epsilon chains, while a peripheral stalk is formed by the delta and b chains.

It localises to the cell inner membrane. Functionally, f(1)F(0) ATP synthase produces ATP from ADP in the presence of a proton or sodium gradient. F-type ATPases consist of two structural domains, F(1) containing the extramembraneous catalytic core and F(0) containing the membrane proton channel, linked together by a central stalk and a peripheral stalk. During catalysis, ATP synthesis in the catalytic domain of F(1) is coupled via a rotary mechanism of the central stalk subunits to proton translocation. Its function is as follows. Component of the F(0) channel, it forms part of the peripheral stalk, linking F(1) to F(0). The protein is ATP synthase subunit b 1 of Bradyrhizobium sp. (strain BTAi1 / ATCC BAA-1182).